Consider the following 543-residue polypeptide: Glucose-6-phosphate isomerase (543 aa).

The active-site Proton donor is the glutamate 353. Residues histidine 384 and lysine 504 contribute to the active site.

The protein belongs to the GPI family.

Its subcellular location is the cytoplasm. It carries out the reaction alpha-D-glucose 6-phosphate = beta-D-fructose 6-phosphate. Its pathway is carbohydrate biosynthesis; gluconeogenesis. The protein operates within carbohydrate degradation; glycolysis; D-glyceraldehyde 3-phosphate and glycerone phosphate from D-glucose: step 2/4. In terms of biological role, catalyzes the reversible isomerization of glucose-6-phosphate to fructose-6-phosphate. This Roseiflexus sp. (strain RS-1) protein is Glucose-6-phosphate isomerase.